Here is a 513-residue protein sequence, read N- to C-terminus: Xylose import ATP-binding protein XylG (513 aa).

ABC transporter domains follow at residues 5–242 (LEMK…VGRE) and 259–505 (LRIE…LRSE). 37 to 44 (GENGSGKS) is an ATP binding site.

It belongs to the ABC transporter superfamily. Xylose importer (TC 3.A.1.2.4) family. The complex is composed of two ATP-binding proteins (XylG), two transmembrane proteins (XylH) and a solute-binding protein (XylF).

The protein resides in the cell inner membrane. It carries out the reaction D-xylose(out) + ATP + H2O = D-xylose(in) + ADP + phosphate + H(+). Its function is as follows. Part of the ABC transporter complex XylFGH involved in xylose import. Responsible for energy coupling to the transport system. This is Xylose import ATP-binding protein XylG from Escherichia coli O6:K15:H31 (strain 536 / UPEC).